A 162-amino-acid chain; its full sequence is Small ribosomal subunit protein uS12m (162 aa).

A mitochondrion-targeting transit peptide spans M1–L37.

The protein belongs to the universal ribosomal protein uS12 family. Component of the mitochondrial small ribosomal subunit (mt-SSU). Mature yeast 74S mitochondrial ribosomes consist of a small (37S) and a large (54S) subunit. The 37S small subunit contains a 15S ribosomal RNA (15S mt-rRNA) and at least 32 different proteins. The 54S large subunit contains a 21S rRNA (21S mt-rRNA) and at least 45 different proteins. uS12m forms part of the decoding center of the mt-SSU.

The protein localises to the mitochondrion. Its function is as follows. Component of the mitochondrial ribosome (mitoribosome), a dedicated translation machinery responsible for the synthesis of mitochondrial genome-encoded proteins, including at least some of the essential transmembrane subunits of the mitochondrial respiratory chain. The mitoribosomes are attached to the mitochondrial inner membrane and translation products are cotranslationally integrated into the membrane. uS12m is required for respiratory growth. This Schizosaccharomyces pombe (strain 972 / ATCC 24843) (Fission yeast) protein is Small ribosomal subunit protein uS12m.